A 485-amino-acid chain; its full sequence is NADH-quinone oxidoreductase subunit N (485 aa).

14 consecutive transmembrane segments (helical) span residues 8 to 28 (LIALLPLLIVGLTVVVVMLSI), 35 to 55 (FLNATLSVLGLNAALVSLWFV), 75 to 95 (LYTGLVLLASLATCTFAYPWL), 105 to 125 (FYLLVLIAALGGILLAGANHL), 127 to 147 (ALFLGIELISLPLFGLVGYAF), 159 to 179 (YTILSAAASSFLLFGMALVYA), 203 to 223 (LLAGLGLMIVGLGFKLSLVPF), 235 to 255 (PAPVSTFLATASKIAIFGVVM), 271 to 291 (VVLGLIAFASIIFGNLMALSQ), 297 to 317 (LLGYSSISHLGYLLVALIALQ), 326 to 346 (VGVYLAGYLFSSLGAFGVVSL), 374 to 394 (AVMTVMMLSLAGIPMTLGFIG), 408 to 430 (WWLVAAVVVGSAIGLYYYLRVAV), and 455 to 475 (IVVLISALLVLVLGIWPQPLI).

Belongs to the complex I subunit 2 family. NDH-1 is composed of 13 different subunits. Subunits NuoA, H, J, K, L, M, N constitute the membrane sector of the complex.

The protein resides in the cell inner membrane. It catalyses the reaction a quinone + NADH + 5 H(+)(in) = a quinol + NAD(+) + 4 H(+)(out). Functionally, NDH-1 shuttles electrons from NADH, via FMN and iron-sulfur (Fe-S) centers, to quinones in the respiratory chain. The immediate electron acceptor for the enzyme in this species is believed to be ubiquinone. Couples the redox reaction to proton translocation (for every two electrons transferred, four hydrogen ions are translocated across the cytoplasmic membrane), and thus conserves the redox energy in a proton gradient. This is NADH-quinone oxidoreductase subunit N from Klebsiella pneumoniae subsp. pneumoniae (strain ATCC 700721 / MGH 78578).